The chain runs to 71 residues: MVNVLKGVLIECDPAMKQFLLYLDESNALGKKFIIQDIDDTHVFVIAELVNVLQERVGELMDQNAFSLTQK.

A Phosphothreonine modification is found at threonine 69.

It belongs to the TFB5 family. Component of the 7-subunit TFIIH core complex composed of XPB/ERCC3, XPD/ERCC2, GTF2H1, GTF2H2, GTF2H3, GTF2H4 and GTF2H5, which is active in NER. The core complex associates with the 3-subunit CDK-activating kinase (CAK) module composed of CCNH/cyclin H, CDK7 and MNAT1 to form the 10-subunit holoenzyme (holo-TFIIH) active in transcription. Part of TBP-based Pol II pre-initiation complex (PIC), in which Pol II core assembles with general transcription factors and other specific initiation factors including GTF2E1, GTF2E2, GTF2F1, GTF2F2, TCEA1, ERCC2, ERCC3, GTF2H2, GTF2H3, GTF2H4, GTF2H5, GTF2A1, GTF2A2, GTF2B and TBP; this large multi-subunit PIC complex mediates DNA unwinding and targets Pol II core to the transcription start site where the first phosphodiester bond forms.

It localises to the nucleus. Its subcellular location is the cytoplasm. Its function is as follows. Component of the general transcription and DNA repair factor IIH (TFIIH) core complex, which is involved in general and transcription-coupled nucleotide excision repair (NER) of damaged DNA and, when complexed to CAK, in RNA transcription by RNA polymerase II. In NER, TFIIH acts by opening DNA around the lesion to allow the excision of the damaged oligonucleotide and its replacement by a new DNA fragment. In transcription, TFIIH has an essential role in transcription initiation. When the pre-initiation complex (PIC) has been established, TFIIH is required for promoter opening and promoter escape. Phosphorylation of the C-terminal tail (CTD) of the largest subunit of RNA polymerase II by the kinase module CAK controls the initiation of transcription. Necessary for the stability of the TFIIH complex and for the presence of normal levels of TFIIH in the cell. In Homo sapiens (Human), this protein is General transcription factor IIH subunit 5.